Here is a 308-residue protein sequence, read N- to C-terminus: Putative acetyl-hydrolase LipR (308 aa).

The signal sequence occupies residues 1 to 40 (MNLRKNVIRSVLRGARPLFASRRLGIAGRRVLLATLTAGA). An Involved in the stabilization of the negatively charged intermediate by the formation of the oxyanion hole motif is present at residues 76 to 78 (HGG). Residues Ser-146, Asp-239, and His-269 contribute to the active site.

It belongs to the 'GDXG' lipolytic enzyme family.

Its function is as follows. Required for maintaining the appropriate mycolic acid composition and permeability of the envelope on its exposure to acidic pH. The sequence is that of Putative acetyl-hydrolase LipR (lipR) from Mycobacterium tuberculosis (strain ATCC 25618 / H37Rv).